The chain runs to 461 residues: Protein-serine O-palmitoleoyltransferase porcupine (461 aa).

Residues 1-17 are Cytoplasmic-facing; it reads MATFSRQEFFQQLLQGC. Residues 18–38 form a helical membrane-spanning segment; the sequence is LLPTVQQGLDQIWLLLTICFA. At 39-66 the chain is on the extracellular side; it reads CRLLWRLGLPSYLKHASTVAGGFFSLYH. Residues 67-87 form a helical membrane-spanning segment; that stretch reads FFQLHMVWVVLLSLLCYLVLF. Over 88-95 the chain is Cytoplasmic; that stretch reads LCRHSSHR. The helical transmembrane segment at 96–116 threads the bilayer; it reads GVFLSVTILIYLLMGEMHMVD. Residues 117–152 are Extracellular-facing; that stretch reads TVTWHKMRGAQMIVAMKAVSLGFDLDRGEVGAVPSP. The chain crosses the membrane as a helical span at residues 153-173; that stretch reads VEFMGYLYFVGTIVFGPWISF. The Cytoplasmic segment spans residues 174 to 198; the sequence is HSYLQAVQGRPLSRRWLKKVARSLA. A helical transmembrane segment spans residues 199–219; sequence LALLCLVLSTCVGPYLFPYFI. Residues 220 to 252 lie on the Extracellular side of the membrane; the sequence is PLDGDRLLRNKKRKARGTMVRWLRAYESAVSFH. Residues 253-273 form a helical membrane-spanning segment; the sequence is FSNYFVGFLSEATATLAGAGF. The Cytoplasmic portion of the chain corresponds to 274–337; that stretch reads TEEKDHLEWD…SAVLVTYAAS (64 aa). Residues 338–358 form a helical membrane-spanning segment; sequence ALLHGFSFHLAAVLLSLAFIT. Histidine 341 is a catalytic residue. The Extracellular portion of the chain corresponds to 359–396; that stretch reads YVEHVLRKRLAQILSACILSKRCLPDCSHRHRLGLGVR. A helical membrane pass occupies residues 397–417; the sequence is ALNLLFGALAIFHLSYLGSLF. Over 418-461 the chain is Cytoplasmic; the sequence is DVDVDDTTEEQGYGMAYTVHKWSELSWASHWVTFGCWIFYRLIG.

This sequence belongs to the membrane-bound acyltransferase family. Porcupine subfamily. In terms of assembly, interacts with WNT1, WNT3, WNT3A, WNT4, WNT5A, WNT5B, WNT6, WNT7A and WNT7B. As to expression, expressed in brain, heart, kidney, liver, lung, muscle, spleen and testis. Isoform 4 is strongly expressed in kidney, liver, lung, spleen and testis. Isoform 1 is strongly expressed in brain, heart and muscle and poorly in kidney, liver, lung, spleen and testis.

The protein resides in the endoplasmic reticulum membrane. The enzyme catalyses [Wnt protein]-L-serine + (9Z)-hexadecenoyl-CoA = [Wnt protein]-O-(9Z)-hexadecenoyl-L-serine + CoA. In terms of biological role, protein-serine O-palmitoleoyltransferase that acts as a key regulator of the Wnt signaling pathway by mediating the attachment of palmitoleate, a 16-carbon monounsaturated fatty acid (C16:1(9Z)), to Wnt proteins. Serine palmitoleoylation of WNT proteins is required for efficient binding to frizzled receptors. This Mus musculus (Mouse) protein is Protein-serine O-palmitoleoyltransferase porcupine.